A 496-amino-acid polypeptide reads, in one-letter code: Glutamyl-tRNA(Gln) amidotransferase subunit A, mitochondrial (496 aa).

Active-site charge relay system residues include Lys80 and Ser161. Ser185 serves as the catalytic Acyl-ester intermediate.

This sequence belongs to the amidase family. GatA subfamily. As to quaternary structure, subunit of the heterotrimeric GatCAB amidotransferase (AdT) complex, composed of A, B and C subunits.

The protein localises to the mitochondrion. It catalyses the reaction L-glutamyl-tRNA(Gln) + L-glutamine + ATP + H2O = L-glutaminyl-tRNA(Gln) + L-glutamate + ADP + phosphate + H(+). Allows the formation of correctly charged Gln-tRNA(Gln) through the transamidation of misacylated Glu-tRNA(Gln) in the mitochondria. The reaction takes place in the presence of glutamine and ATP through an activated gamma-phospho-Glu-tRNA(Gln). This is Glutamyl-tRNA(Gln) amidotransferase subunit A, mitochondrial from Culex quinquefasciatus (Southern house mosquito).